We begin with the raw amino-acid sequence, 184 residues long: Ribulose bisphosphate carboxylase small subunit, chloroplastic 5 (184 aa).

Residues 1–43 (MAAAMMNKTIVVSKDGCARSSSIPKVATNKMGFASAVAMKKSR) constitute a chloroplast transit peptide.

This sequence belongs to the RuBisCO small chain family. In terms of assembly, heterohexadecamer of 8 large and 8 small subunits.

The protein localises to the plastid. It localises to the chloroplast. Functionally, ruBisCO catalyzes two reactions: the carboxylation of D-ribulose 1,5-bisphosphate, the primary event in carbon dioxide fixation, as well as the oxidative fragmentation of the pentose substrate. Both reactions occur simultaneously and in competition at the same active site. Although the small subunit is not catalytic it is essential for maximal activity. The sequence is that of Ribulose bisphosphate carboxylase small subunit, chloroplastic 5 from Acetabularia peniculus (Green alga).